The sequence spans 409 residues: MARAFLFVLDSFGIGHAPDAARFGDEGANTFGHIAGACAAGRADRAGLRTGPLDLPHMQSLGLNAAAAIAAGREPERGFASTGFFGAAEERSTGKDTPSGHWEIAGVPVPFEWGYFPETTPSFPAELTGRLIREASLPGILANCHASGTEVIARLGEEHIRTGKPICYTSADSVFQIAAHETHFGLDRLYAVCETARRLVDDYRIGRVIARPFVGESAETFERTANRRDYAVPPPEPTLLDRVEAAGRRVIGIGKIGDIFAHQGVTEVRKAAGNMALFDAALGAMDDAREGDLVFANFVDFDSLYGHRRDVAGYAAALEAFDRRLPEALGKLRAGDLLILTADHGCDPTWRGTDHTRECVPILGAGPGLAKGSIGRRRSYADIGETIASHLALPAGRHGVSFLNALQHA.

6 residues coordinate Mn(2+): Asp-10, Asp-302, His-307, Asp-343, His-344, and His-355.

The protein belongs to the phosphopentomutase family. Requires Mn(2+) as cofactor.

The protein localises to the cytoplasm. It carries out the reaction 2-deoxy-alpha-D-ribose 1-phosphate = 2-deoxy-D-ribose 5-phosphate. The enzyme catalyses alpha-D-ribose 1-phosphate = D-ribose 5-phosphate. It participates in carbohydrate degradation; 2-deoxy-D-ribose 1-phosphate degradation; D-glyceraldehyde 3-phosphate and acetaldehyde from 2-deoxy-alpha-D-ribose 1-phosphate: step 1/2. In terms of biological role, isomerase that catalyzes the conversion of deoxy-ribose 1-phosphate (dRib-1-P) and ribose 1-phosphate (Rib-1-P) to deoxy-ribose 5-phosphate (dRib-5-P) and ribose 5-phosphate (Rib-5-P), respectively. The chain is Phosphopentomutase from Chelativorans sp. (strain BNC1).